Here is a 751-residue protein sequence, read N- to C-terminus: Conserved oligomeric Golgi complex subunit 5 (751 aa).

Disordered stretches follow at residues 1-21 (MVTG…DDND) and 244-263 (SPTH…KTPQ).

The protein belongs to the COG5 family. In terms of assembly, component of the conserved oligomeric Golgi complex which is composed of eight different subunits and is required for normal Golgi morphology and localization.

It localises to the golgi apparatus membrane. Its function is as follows. Required for normal Golgi function and necessary during spermatogenesis. Required for cleavage furrow ingression during cytokinesis in dividing spermatocytes and for the extensive polarized cell growth that accompanies spermatid elongation. This Drosophila melanogaster (Fruit fly) protein is Conserved oligomeric Golgi complex subunit 5 (fws).